The sequence spans 57 residues: Large ribosomal subunit protein bL32 (57 aa).

It belongs to the bacterial ribosomal protein bL32 family.

This is Large ribosomal subunit protein bL32 from Streptomyces avermitilis (strain ATCC 31267 / DSM 46492 / JCM 5070 / NBRC 14893 / NCIMB 12804 / NRRL 8165 / MA-4680).